The following is a 387-amino-acid chain: Exodeoxyribonuclease 7 large subunit (387 aa).

It belongs to the XseA family. As to quaternary structure, heterooligomer composed of large and small subunits.

It is found in the cytoplasm. It carries out the reaction Exonucleolytic cleavage in either 5'- to 3'- or 3'- to 5'-direction to yield nucleoside 5'-phosphates.. Functionally, bidirectionally degrades single-stranded DNA into large acid-insoluble oligonucleotides, which are then degraded further into small acid-soluble oligonucleotides. The polypeptide is Exodeoxyribonuclease 7 large subunit (Synechococcus sp. (strain CC9605)).